The chain runs to 238 residues: Phosphoribosylaminoimidazole-succinocarboxamide synthase (238 aa).

This sequence belongs to the SAICAR synthetase family.

It carries out the reaction 5-amino-1-(5-phospho-D-ribosyl)imidazole-4-carboxylate + L-aspartate + ATP = (2S)-2-[5-amino-1-(5-phospho-beta-D-ribosyl)imidazole-4-carboxamido]succinate + ADP + phosphate + 2 H(+). Its pathway is purine metabolism; IMP biosynthesis via de novo pathway; 5-amino-1-(5-phospho-D-ribosyl)imidazole-4-carboxamide from 5-amino-1-(5-phospho-D-ribosyl)imidazole-4-carboxylate: step 1/2. This Alcanivorax borkumensis (strain ATCC 700651 / DSM 11573 / NCIMB 13689 / SK2) protein is Phosphoribosylaminoimidazole-succinocarboxamide synthase.